Reading from the N-terminus, the 382-residue chain is D-galactonate dehydratase (382 aa).

D183 contributes to the Mg(2+) binding site. The Proton donor role is filled by H185. E209 and E235 together coordinate Mg(2+). H285 (proton acceptor) is an active-site residue.

The protein belongs to the mandelate racemase/muconate lactonizing enzyme family. GalD subfamily. Mg(2+) serves as cofactor.

It carries out the reaction D-galactonate = 2-dehydro-3-deoxy-D-galactonate + H2O. The protein operates within carbohydrate acid metabolism; D-galactonate degradation; D-glyceraldehyde 3-phosphate and pyruvate from D-galactonate: step 1/3. Catalyzes the dehydration of D-galactonate to 2-keto-3-deoxy-D-galactonate. In Escherichia coli O9:H4 (strain HS), this protein is D-galactonate dehydratase.